An 86-amino-acid chain; its full sequence is Small ribosomal subunit protein bS16 (86 aa).

Belongs to the bacterial ribosomal protein bS16 family.

The polypeptide is Small ribosomal subunit protein bS16 (Thermoanaerobacter pseudethanolicus (strain ATCC 33223 / 39E) (Clostridium thermohydrosulfuricum)).